The sequence spans 72 residues: uncharacterized protein (72 aa).

This is an uncharacterized protein from Dictyostelium discoideum (Social amoeba).